A 397-amino-acid chain; its full sequence is MMRKLAILSVSSFLFVEALFQEYQCYGSSSNTRVLNELNYDNAGTNLYNELEMNYYGKQENWYSLKKNSRSLGENDDGNNEDNEKLRKPKHKKLKQPADGNPDPNANPNVDPNANPNVDPNANPNVDPNANPNANPNANPNANPNANPNANPNANPNANPNANPNANPNANPNANPNANPNANPNANPNANPNANPNVDPNANPNANPNANPNANPNANPNANPNANPNANPNANPNANPNANPNANPNANPNANPNANPNANPNANPNANPNKNNQGNGQGHNMPNDPNRNVDENANANSAVKNNNNEEPSDKHIKEYLNKIQNSLSTEWSPCSVTCGNGIQVRIKPGSANKPKDELDYANDIEKKICKMEKCSSVFNVVNSSIGLIMVLSFLFLN.

Positions Met-1–Ala-18 are cleaved as a signal peptide. Residues Ser-69 to Asp-313 form a disordered region. A required for the binding to heparan sulfate proteoglycans (HSPGs) on the surface of host hepatocytes region spans residues Lys-85 to Lys-92. A region I; contains the proteolytic cleavage site region spans residues Lys-93 to Pro-97. Residues Asn-101–Asn-273 show a composition bias toward low complexity. 42 tandem repeats follow at residues Asn-105 to Pro-108, Asn-109 to Pro-112, Asn-113 to Pro-116, Asn-117 to Pro-120, Asn-121 to Pro-124, Asn-125 to Pro-128, Asn-129 to Pro-132, Asn-133 to Pro-136, Asn-137 to Pro-140, Asn-141 to Pro-144, Asn-145 to Pro-148, Asn-149 to Pro-152, Asn-153 to Pro-156, Asn-157 to Pro-160, Asn-161 to Pro-164, Asn-165 to Pro-168, Asn-169 to Pro-172, Asn-173 to Pro-176, Asn-177 to Pro-180, Asn-181 to Pro-184, Asn-185 to Pro-188, Asn-189 to Pro-192, Asn-193 to Pro-196, Asn-197 to Pro-200, Asn-201 to Pro-204, Asn-205 to Pro-208, Asn-209 to Pro-212, Asn-213 to Pro-216, Asn-217 to Pro-220, Asn-221 to Pro-224, Asn-225 to Pro-228, Asn-229 to Pro-232, Asn-233 to Pro-236, Asn-237 to Pro-240, Asn-241 to Pro-244, Asn-245 to Pro-248, Asn-249 to Pro-252, Asn-253 to Pro-256, Asn-257 to Pro-260, Asn-261 to Pro-264, Asn-265 to Pro-268, and Asn-269 to Pro-272. The 42 X 4 AA tandem repeats of N-[AV]-[ND]-P stretch occupies residues Asn-105–Pro-272. Residues Lys-274–Asn-290 are compositionally biased toward polar residues. The segment covering Glu-295–Glu-309 has biased composition (low complexity). Residues Lys-322–Ser-375 enclose the TSP type-1 domain. 2 disulfide bridges follow: Cys-334–Cys-369 and Cys-338–Cys-374. An O-linked (Fuc) threonine glycan is attached at Thr-337. Cys-374 is lipidated: GPI-anchor amidated cysteine. The propeptide at Ser-375–Asn-397 is removed in mature form.

The protein belongs to the plasmodium circumsporozoite protein family. During host cell invasion, proteolytically cleaved at the cell membrane in the region I by a papain-like cysteine protease of parasite origin. Cleavage is triggered by the sporozoite contact with highly sulfated heparan sulfate proteoglycans (HSPGs) present on the host hepatocyte cell surface. Cleavage exposes the TSP type-1 (TSR) domain and is required for productive invasion of host hepatocytes but not for adhesion to the host cell membrane. Cleavage is dispensable for sporozoite development in the oocyst, motility and for traversal of host and vector cells. In terms of processing, O-glycosylated; maybe by POFUT2.

It localises to the cell membrane. The protein resides in the cytoplasm. Functionally, essential sporozoite protein. In the mosquito vector, required for sporozoite development in the oocyst, migration through the vector hemolymph and entry into the vector salivary glands. In the vertebrate host, required for sporozoite migration through the host dermis and infection of host hepatocytes. Binds to highly sulfated heparan sulfate proteoglycans (HSPGs) on the surface of host hepatocytes. In terms of biological role, in the vertebrate host, binds to highly sulfated heparan sulfate proteoglycans (HSPGs) on the surface of host hepatocytes and is required for sporozoite invasion of the host hepatocytes. The chain is Circumsporozoite protein from Plasmodium falciparum (isolate NF54).